A 103-amino-acid polypeptide reads, in one-letter code: Co-chaperonin GroES (103 aa).

It belongs to the GroES chaperonin family. As to quaternary structure, heptamer of 7 subunits arranged in a ring. Interacts with the chaperonin GroEL.

Its subcellular location is the cytoplasm. In terms of biological role, together with the chaperonin GroEL, plays an essential role in assisting protein folding. The GroEL-GroES system forms a nano-cage that allows encapsulation of the non-native substrate proteins and provides a physical environment optimized to promote and accelerate protein folding. GroES binds to the apical surface of the GroEL ring, thereby capping the opening of the GroEL channel. This is Co-chaperonin GroES from Dinoroseobacter shibae (strain DSM 16493 / NCIMB 14021 / DFL 12).